Consider the following 66-residue polypeptide: Large ribosomal subunit protein uL30 (66 aa).

It belongs to the universal ribosomal protein uL30 family. As to quaternary structure, part of the 50S ribosomal subunit.

The polypeptide is Large ribosomal subunit protein uL30 (Brucella anthropi (strain ATCC 49188 / DSM 6882 / CCUG 24695 / JCM 21032 / LMG 3331 / NBRC 15819 / NCTC 12168 / Alc 37) (Ochrobactrum anthropi)).